Here is a 321-residue protein sequence, read N- to C-terminus: Protein translocase subunit SecF (321 aa).

The next 6 helical transmembrane spans lie at 23 to 43 (VWLISGFAVLISFLGFFFSWT), 158 to 178 (LQTTLISLLVAFSCVAIYISI), 189 to 209 (LLALFHDVLIVCGVFSWLGII), 217 to 237 (LFAVALLTIAGYSVNDTVVVF), 258 to 280 (FAVSATLTRTLYTSGTTLLPLIA), and 290 to 312 (YWFAIALALGVVVGSWSSIALVP).

The protein belongs to the SecD/SecF family. SecF subfamily. Forms a complex with SecD. Part of the essential Sec protein translocation apparatus which comprises SecA, SecYEG and auxiliary proteins SecDF. Other proteins may also be involved.

It localises to the cell inner membrane. Part of the Sec protein translocase complex. Interacts with the SecYEG preprotein conducting channel. SecDF uses the proton motive force (PMF) to complete protein translocation after the ATP-dependent function of SecA. In terms of biological role, probably participates in protein translocation into and across both the cytoplasmic and thylakoid membranes in cyanobacterial cells. This is Protein translocase subunit SecF from Prochlorococcus marinus (strain SARG / CCMP1375 / SS120).